A 342-amino-acid chain; its full sequence is Zinc transporter ZIP11 (342 aa).

7 helical membrane passes run Leu-12 to Phe-32, Leu-44 to Val-64, Gly-72 to Val-92, Ile-194 to Val-214, Phe-263 to Val-285, Ile-290 to Met-307, and Leu-322 to Gly-342.

Belongs to the ZIP transporter (TC 2.A.5) family.

It localises to the cell membrane. It is found in the nucleus. The protein resides in the cytoplasm. The protein localises to the golgi apparatus. The catalysed reaction is Zn(2+)(in) = Zn(2+)(out). It carries out the reaction Cu(2+)(in) = Cu(2+)(out). Functionally, zinc importer that regulates cytosolic zinc concentrations either via zinc influx from the extracellular compartment or efflux from intracellular organelles such as Golgi apparatus. May transport copper ions as well. The transport mechanism remains to be elucidated. In Homo sapiens (Human), this protein is Zinc transporter ZIP11 (SLC39A11).